We begin with the raw amino-acid sequence, 174 residues long: Guided entry of tail-anchored proteins factor 1 (174 aa).

Residues 1 to 8 (MSASETDR) are Lumenal-facing. The chain crosses the membrane as a helical span at residues 9–29 (WAWLLVLCFVFGCNVLRILLP). The Cytoplasmic segment spans residues 30-99 (TLSSFISRVL…VKARTAQLAK (70 aa)). Positions 39–94 (LQKDAEQESQMRAEIQSMKQELSTVNMMDEFARYARLERKINKMTDKLKTHVKART) form a coiled coil. An interaction with GET3/TRC40 region spans residues 39 to 97 (LQKDAEQESQMRAEIQSMKQELSTVNMMDEFARYARLERKINKMTDKLKTHVKARTAQL). A helical membrane pass occupies residues 100–120 (IKWFISVAFYVLQAALMISLI). Topologically, residues 121–148 (WKYYSVPVAVVPSKWITPLDRLVAFPTR) are lumenal. A helical membrane pass occupies residues 149–169 (VAGGIGVTCWILVCNKVVAII). Topologically, residues 170-174 (LHPFS) are cytoplasmic.

The protein belongs to the WRB/GET1 family. In terms of assembly, component of the Golgi to ER traffic (GET) complex, which is composed of GET1, CAMLG/GET2 and GET3. Within the complex, GET1 and CAMLG form a heterotetramer which is stabilized by phosphatidylinositol binding and which binds to the GET3 homodimer. Interacts with CAMLG/GET2 (via C-terminus). GET3 shows a higher affinity for CAMLG than for GET1.

The protein resides in the endoplasmic reticulum membrane. In terms of biological role, required for the post-translational delivery of tail-anchored (TA) proteins to the endoplasmic reticulum. Together with CAMLG/GET2, acts as a membrane receptor for soluble GET3/TRC40, which recognizes and selectively binds the transmembrane domain of TA proteins in the cytosol. Required to ensure correct topology and ER insertion of CAMLG. This chain is Guided entry of tail-anchored proteins factor 1, found in Rattus norvegicus (Rat).